The sequence spans 67 residues: DNA-directed RNA polymerase subunit omega (67 aa).

This sequence belongs to the RNA polymerase subunit omega family. In terms of assembly, the RNAP catalytic core consists of 2 alpha, 1 beta, 1 beta' and 1 omega subunit. When a sigma factor is associated with the core the holoenzyme is formed, which can initiate transcription.

It carries out the reaction RNA(n) + a ribonucleoside 5'-triphosphate = RNA(n+1) + diphosphate. Promotes RNA polymerase assembly. Latches the N- and C-terminal regions of the beta' subunit thereby facilitating its interaction with the beta and alpha subunits. In Bordetella petrii (strain ATCC BAA-461 / DSM 12804 / CCUG 43448), this protein is DNA-directed RNA polymerase subunit omega.